Consider the following 115-residue polypeptide: MDPLIQELTKEQIRDDIPAFRAGDTVTVHVRVVEGTHERIQLFEGVVIKKKGTGIGATYTVRKIASGVGVERTFPVNDPRVAKVEVKRHGRVRRAKLYYLRERHGKSARIAEARR.

It belongs to the bacterial ribosomal protein bL19 family.

Its function is as follows. This protein is located at the 30S-50S ribosomal subunit interface and may play a role in the structure and function of the aminoacyl-tRNA binding site. This chain is Large ribosomal subunit protein bL19, found in Lactobacillus acidophilus (strain ATCC 700396 / NCK56 / N2 / NCFM).